The sequence spans 209 residues: uncharacterized protein (209 aa).

This is an uncharacterized protein from Sulfolobus islandicus rod-shaped virus 1 (SIRV-1).